We begin with the raw amino-acid sequence, 455 residues long: Anaerobic glycerol-3-phosphate dehydrogenase subunit B (455 aa).

Belongs to the anaerobic G-3-P dehydrogenase subunit B family. Composed of a catalytic GlpA/B dimer and of membrane bound GlpC. The cofactor is FMN.

The enzyme catalyses a quinone + sn-glycerol 3-phosphate = dihydroxyacetone phosphate + a quinol. It functions in the pathway polyol metabolism; glycerol degradation via glycerol kinase pathway; glycerone phosphate from sn-glycerol 3-phosphate (anaerobic route): step 1/1. In terms of biological role, conversion of glycerol 3-phosphate to dihydroxyacetone. Uses fumarate or nitrate as electron acceptor. The polypeptide is Anaerobic glycerol-3-phosphate dehydrogenase subunit B (Aliivibrio fischeri (strain ATCC 700601 / ES114) (Vibrio fischeri)).